A 608-amino-acid polypeptide reads, in one-letter code: Elongation factor 4 (608 aa).

The 183-residue stretch at 11–193 (DHIRNFSIVA…AIVNRLPPPK (183 aa)) folds into the tr-type G domain. GTP contacts are provided by residues 23 to 28 (DHGKST) and 140 to 143 (NKID).

The protein belongs to the TRAFAC class translation factor GTPase superfamily. Classic translation factor GTPase family. LepA subfamily.

It is found in the cell inner membrane. It carries out the reaction GTP + H2O = GDP + phosphate + H(+). Required for accurate and efficient protein synthesis under certain stress conditions. May act as a fidelity factor of the translation reaction, by catalyzing a one-codon backward translocation of tRNAs on improperly translocated ribosomes. Back-translocation proceeds from a post-translocation (POST) complex to a pre-translocation (PRE) complex, thus giving elongation factor G a second chance to translocate the tRNAs correctly. Binds to ribosomes in a GTP-dependent manner. This is Elongation factor 4 from Agrobacterium fabrum (strain C58 / ATCC 33970) (Agrobacterium tumefaciens (strain C58)).